The primary structure comprises 257 residues: Gamma-secretase subunit APH-1B (257 aa).

A run of 7 helical transmembrane segments spans residues 5 to 25 (VFFG…VFTI), 32 to 52 (VIFL…SSVF), 66 to 86 (PVQN…QELF), 115 to 135 (LLAY…SFVN), 160 to 180 (AFMT…FFDG), 186 to 206 (WYTL…TFLS), and 213 to 233 (LVTA…VAGG).

The protein belongs to the APH-1 family. As to quaternary structure, probable component of the gamma-secretase complex, a complex composed of a presenilin homodimer (PSEN1 or PSEN2), nicastrin (NCSTN), APH1 (APH1A or APH1B) and PEN2. Such minimal complex is sufficient for secretase activity, although other components may exist. Interacts with PSEN1 and PSEN2.

It localises to the membrane. Its function is as follows. Probable subunit of the gamma-secretase complex, an endoprotease complex that catalyzes the intramembrane cleavage of integral proteins such as Notch receptors and APP (amyloid-beta precursor protein). It probably represents a stabilizing cofactor for the presenilin homodimer that promotes the formation of a stable complex. Probably present in a minority of gamma-secretase complexes compared to APH1A. This Mus musculus (Mouse) protein is Gamma-secretase subunit APH-1B (Aph1b).